Reading from the N-terminus, the 729-residue chain is Fatty acid oxidation complex subunit alpha (729 aa).

The enoyl-CoA hydratase/isomerase stretch occupies residues 1-189; sequence MLYQSETLQL…KVGLVDAVVA (189 aa). Position 296 (Asp296) interacts with substrate. Positions 311 to 729 are 3-hydroxyacyl-CoA dehydrogenase; that stretch reads SAPKQAAVLG…LLDVSISQPA (419 aa). NAD(+)-binding positions include Met324, Asp343, 400 to 402, Lys407, and Ser429; that span reads VVE. His450 functions as the For 3-hydroxyacyl-CoA dehydrogenase activity in the catalytic mechanism. NAD(+) is bound at residue Asn453. Substrate-binding residues include Asn500 and Tyr660.

It in the N-terminal section; belongs to the enoyl-CoA hydratase/isomerase family. In the C-terminal section; belongs to the 3-hydroxyacyl-CoA dehydrogenase family. As to quaternary structure, heterotetramer of two alpha chains (FadB) and two beta chains (FadA).

The catalysed reaction is a (3S)-3-hydroxyacyl-CoA + NAD(+) = a 3-oxoacyl-CoA + NADH + H(+). It catalyses the reaction a (3S)-3-hydroxyacyl-CoA = a (2E)-enoyl-CoA + H2O. The enzyme catalyses a 4-saturated-(3S)-3-hydroxyacyl-CoA = a (3E)-enoyl-CoA + H2O. It carries out the reaction (3S)-3-hydroxybutanoyl-CoA = (3R)-3-hydroxybutanoyl-CoA. The catalysed reaction is a (3Z)-enoyl-CoA = a 4-saturated (2E)-enoyl-CoA. It catalyses the reaction a (3E)-enoyl-CoA = a 4-saturated (2E)-enoyl-CoA. It functions in the pathway lipid metabolism; fatty acid beta-oxidation. Involved in the aerobic and anaerobic degradation of long-chain fatty acids via beta-oxidation cycle. Catalyzes the formation of 3-oxoacyl-CoA from enoyl-CoA via L-3-hydroxyacyl-CoA. It can also use D-3-hydroxyacyl-CoA and cis-3-enoyl-CoA as substrate. This Yersinia enterocolitica serotype O:8 / biotype 1B (strain NCTC 13174 / 8081) protein is Fatty acid oxidation complex subunit alpha.